The following is a 679-amino-acid chain: Glycine--tRNA ligase beta subunit (679 aa).

Belongs to the class-II aminoacyl-tRNA synthetase family. Tetramer of two alpha and two beta subunits.

It localises to the cytoplasm. The enzyme catalyses tRNA(Gly) + glycine + ATP = glycyl-tRNA(Gly) + AMP + diphosphate. The chain is Glycine--tRNA ligase beta subunit from Streptococcus agalactiae serotype III (strain NEM316).